A 304-amino-acid chain; its full sequence is Calmodulin-lysine N-methyltransferase (304 aa).

This sequence belongs to the class I-like SAM-binding methyltransferase superfamily. CLNMT methyltransferase family. In terms of assembly, monomer. In terms of tissue distribution, expressed in discreet spatial and tissue-specific patterns including root tips, leaves-tips, floral buds, stamens, hydathodes, stigma, anther, siliques, apical meristems and germinating seeds. Also observed at high levels in the root stele region.

It localises to the cytoplasm. The protein resides in the nucleus. It catalyses the reaction [calmodulin]-L-lysine + S-adenosyl-L-methionine = [calmodulin]-N(6)-methyl-L-lysine + S-adenosyl-L-homocysteine + H(+). In terms of biological role, catalyzes the trimethylation of calmodulin. Regulates roots development probably by modulating auxin signaling responses. May be involved in gravitropism. Involved in abscisic acid (ABA)-mediated and abiotic stress responses, including salt (NaCl), cold, drought and heat stresses. The chain is Calmodulin-lysine N-methyltransferase from Arabidopsis thaliana (Mouse-ear cress).